Consider the following 375-residue polypeptide: Protein RecA (375 aa).

An ATP-binding site is contributed by Gly-75–Thr-82. Residues Gly-339–Asn-375 are disordered. The span at Gln-348–Asp-358 shows a compositional bias: acidic residues.

The protein belongs to the RecA family.

It localises to the cytoplasm. Its function is as follows. Can catalyze the hydrolysis of ATP in the presence of single-stranded DNA, the ATP-dependent uptake of single-stranded DNA by duplex DNA, and the ATP-dependent hybridization of homologous single-stranded DNAs. It interacts with LexA causing its activation and leading to its autocatalytic cleavage. In Corynebacterium jeikeium (strain K411), this protein is Protein RecA.